The following is a 203-amino-acid chain: MFIVVEGGEGAGKTQFIQALSKRLIEEGREIVTTREPGGCSLGDSVRGLLLDPEQKISPYAELLLFLAARAQHIQEKIIPALKSGKTVISDRFHDSTIVYQGIAGGLGESFVTNLCYHVVGDKPFLPDITFLLDIPAREGLLRKARQKHLDKFEQKPQIFHRSVREGFLALAEKAPDRYKVLDALLPTEASVDQALLQIRALI.

ATP is bound at residue 7–14 (GGEGAGKT).

It belongs to the thymidylate kinase family.

It carries out the reaction dTMP + ATP = dTDP + ADP. Functionally, phosphorylation of dTMP to form dTDP in both de novo and salvage pathways of dTTP synthesis. This is Thymidylate kinase (tmk) from Chlamydia trachomatis serovar D (strain ATCC VR-885 / DSM 19411 / UW-3/Cx).